The primary structure comprises 539 residues: Chaperonin GroEL 1 (539 aa).

Residues 29 to 32, 86 to 90, Gly413, and Asp495 contribute to the ATP site; these read TLGP and DGTTT.

This sequence belongs to the chaperonin (HSP60) family. In terms of assembly, forms a cylinder of 14 subunits composed of two heptameric rings stacked back-to-back. Interacts with the co-chaperonin GroES.

Its subcellular location is the cytoplasm. It carries out the reaction ATP + H2O + a folded polypeptide = ADP + phosphate + an unfolded polypeptide.. Functionally, together with its co-chaperonin GroES, plays an essential role in assisting protein folding. The GroEL-GroES system forms a nano-cage that allows encapsulation of the non-native substrate proteins and provides a physical environment optimized to promote and accelerate protein folding. The polypeptide is Chaperonin GroEL 1 (Mycobacterium bovis (strain ATCC BAA-935 / AF2122/97)).